The primary structure comprises 234 residues: L-cystine transport system permease protein TcyB (234 aa).

5 helical membrane-spanning segments follow: residues 8-28 (ALTL…WPIL), 36-56 (IPLT…TALA), 78-98 (TPLL…NVTL), 100-120 (PFPS…SEII), and 199-219 (ILVI…LLSL). Residues 32–221 (IYYTIPLTIL…IICFLLSLVQ (190 aa)) form the ABC transmembrane type-1 domain.

Belongs to the binding-protein-dependent transport system permease family. In terms of assembly, the complex is composed of two ATP-binding proteins (TcyC), two transmembrane proteins (TcyB) and a solute-binding protein (TcyA).

Its subcellular location is the cell membrane. Part of the ABC transporter complex TcyABC involved in L-cystine import. Probably responsible for the translocation of the substrate across the membrane. The polypeptide is L-cystine transport system permease protein TcyB (tcyB) (Bacillus subtilis (strain 168)).